The following is an 819-amino-acid chain: Myosin light chain kinase 3 (819 aa).

3 disordered regions span residues 146–256 (VPWR…TPSE), 273–334 (VVSP…TPPR), and 347–462 (EMLM…EQDC). Position 152 is a phosphoserine (serine 152). 2 stretches are compositionally biased toward basic and acidic residues: residues 158–170 (EENKERVEEEGGK) and 183–196 (DAREPGEESQKADV). Residues 307-318 (GPGPQCPGPPGL) are compositionally biased toward pro residues. Phosphoserine occurs at positions 355, 401, and 408. In terms of domain architecture, Protein kinase spans 515-770 (VCQHEVLGGG…ATQCLKHEWL (256 aa)). Residues 521 to 529 (LGGGRFGQV) and lysine 544 each bind ATP. Residue aspartate 636 is the Proton acceptor of the active site.

This sequence belongs to the protein kinase superfamily. CAMK Ser/Thr protein kinase family. Requires Mg(2+) as cofactor. In terms of processing, phosphorylated on serine residues. In terms of tissue distribution, restricted to heart.

The protein localises to the cytoplasm. The enzyme catalyses L-seryl-[myosin light chain] + ATP = O-phospho-L-seryl-[myosin light chain] + ADP + H(+). It carries out the reaction L-threonyl-[myosin light chain] + ATP = O-phospho-L-threonyl-[myosin light chain] + ADP + H(+). Its function is as follows. Kinase that phosphorylates MYL2 in vitro. Promotes sarcomere formation in cardiomyocytes and increases cardiomyocyte contractility. This chain is Myosin light chain kinase 3 (MYLK3), found in Homo sapiens (Human).